The sequence spans 287 residues: Large ribosomal subunit protein uL2 (287 aa).

The interval 216-287 is disordered; that stretch reads RRPEVRGSVM…SKRGRGGRDA (72 aa). The span at 271 to 287 shows a compositional bias: basic residues; it reads QRRRRKSSKRGRGGRDA.

This sequence belongs to the universal ribosomal protein uL2 family. As to quaternary structure, part of the 50S ribosomal subunit. Forms a bridge to the 30S subunit in the 70S ribosome.

Its function is as follows. One of the primary rRNA binding proteins. Required for association of the 30S and 50S subunits to form the 70S ribosome, for tRNA binding and peptide bond formation. It has been suggested to have peptidyltransferase activity; this is somewhat controversial. Makes several contacts with the 16S rRNA in the 70S ribosome. This Synechococcus sp. (strain ATCC 27144 / PCC 6301 / SAUG 1402/1) (Anacystis nidulans) protein is Large ribosomal subunit protein uL2.